Consider the following 242-residue polypeptide: ATP-dependent dethiobiotin synthetase BioD (242 aa).

12-17 (EVGKTV) serves as a coordination point for ATP. Thr16 contacts Mg(2+). The active site involves Lys37. Ser41 lines the substrate pocket. Residues Asp51 and 112–115 (EGAG) each bind ATP. 2 residues coordinate Mg(2+): Asp51 and Glu112.

The protein belongs to the dethiobiotin synthetase family. Homodimer. The cofactor is Mg(2+).

The protein localises to the cytoplasm. The catalysed reaction is (7R,8S)-7,8-diammoniononanoate + CO2 + ATP = (4R,5S)-dethiobiotin + ADP + phosphate + 3 H(+). It functions in the pathway cofactor biosynthesis; biotin biosynthesis; biotin from 7,8-diaminononanoate: step 1/2. In terms of biological role, catalyzes a mechanistically unusual reaction, the ATP-dependent insertion of CO2 between the N7 and N8 nitrogen atoms of 7,8-diaminopelargonic acid (DAPA, also called 7,8-diammoniononanoate) to form a ureido ring. This Bacillus thuringiensis (strain Al Hakam) protein is ATP-dependent dethiobiotin synthetase BioD.